The sequence spans 133 residues: MIVRNVKDVIGTQDEVRTDTWVSRRVLLKKDGMGFSFHETTIFPGGRTHIHYKNHLEAVWCIEGDGSIETIADGKKYELGPGVVYALNEHDEHWLCGGKEPLRVICVFNPPLTGQEVHDADGVYALPAEAQAA.

It belongs to the ectoine synthase family.

It catalyses the reaction (2S)-4-acetamido-2-aminobutanoate = L-ectoine + H2O. It functions in the pathway amine and polyamine biosynthesis; ectoine biosynthesis; L-ectoine from L-aspartate 4-semialdehyde: step 3/3. Functionally, catalyzes the circularization of gamma-N-acetyl-alpha,gamma-diaminobutyric acid (ADABA) to ectoine (1,4,5,6-tetrahydro-2-methyl-4-pyrimidine carboxylic acid), which is an excellent osmoprotectant. This is L-ectoine synthase from Bordetella petrii (strain ATCC BAA-461 / DSM 12804 / CCUG 43448).